Reading from the N-terminus, the 111-residue chain is Cytochrome c (111 aa).

N-acetylalanine is present on Ala-1. Heme c contacts are provided by Cys-22, Cys-25, and His-26. Lys-80 carries the N6,N6,N6-trimethyllysine modification. Met-88 contributes to the heme c binding site. N6,N6,N6-trimethyllysine is present on Lys-94.

It belongs to the cytochrome c family. Binds 1 heme c group covalently per subunit.

It is found in the mitochondrion intermembrane space. In terms of biological role, electron carrier protein. The oxidized form of the cytochrome c heme group can accept an electron from the heme group of the cytochrome c1 subunit of cytochrome reductase. Cytochrome c then transfers this electron to the cytochrome oxidase complex, the final protein carrier in the mitochondrial electron-transport chain. The chain is Cytochrome c from Vigna radiata var. radiata (Mung bean).